The chain runs to 145 residues: D-aminoacyl-tRNA deacylase (145 aa).

The Gly-cisPro motif, important for rejection of L-amino acids motif lies at 137-138 (GP).

This sequence belongs to the DTD family. As to quaternary structure, homodimer.

It localises to the cytoplasm. The catalysed reaction is glycyl-tRNA(Ala) + H2O = tRNA(Ala) + glycine + H(+). The enzyme catalyses a D-aminoacyl-tRNA + H2O = a tRNA + a D-alpha-amino acid + H(+). Functionally, an aminoacyl-tRNA editing enzyme that deacylates mischarged D-aminoacyl-tRNAs. Also deacylates mischarged glycyl-tRNA(Ala), protecting cells against glycine mischarging by AlaRS. Acts via tRNA-based rather than protein-based catalysis; rejects L-amino acids rather than detecting D-amino acids in the active site. By recycling D-aminoacyl-tRNA to D-amino acids and free tRNA molecules, this enzyme counteracts the toxicity associated with the formation of D-aminoacyl-tRNA entities in vivo and helps enforce protein L-homochirality. The polypeptide is D-aminoacyl-tRNA deacylase (Pseudomonas paraeruginosa (strain DSM 24068 / PA7) (Pseudomonas aeruginosa (strain PA7))).